A 428-amino-acid chain; its full sequence is Putative UDP-glucose 6-dehydrogenase YtcA (428 aa).

Positions 1 to 23 are cleaved as a signal peptide; that stretch reads MKICVVGAGYVGLTLSAALASIG. NAD(+) contacts are provided by residues 2–19, V11, D30, K35, T118, and E152; that span reads KICVVGAGYVGLTLSAAL. Residues 148–152, K203, N207, 248–252, and G256 each bind substrate; these read EFLRE and FLQAG. The active-site Nucleophile is C259. K262 provides a ligand contact to NAD(+). A substrate-binding site is contributed by K319. R326 provides a ligand contact to NAD(+).

This sequence belongs to the UDP-glucose/GDP-mannose dehydrogenase family.

The catalysed reaction is UDP-alpha-D-glucose + 2 NAD(+) + H2O = UDP-alpha-D-glucuronate + 2 NADH + 3 H(+). The protein operates within nucleotide-sugar biosynthesis; UDP-alpha-D-glucuronate biosynthesis; UDP-alpha-D-glucuronate from UDP-alpha-D-glucose: step 1/1. Its function is as follows. Catalyzes the conversion of UDP-glucose into UDP-glucuronate, one of the precursors of teichuronic acid. This is Putative UDP-glucose 6-dehydrogenase YtcA (ytcA) from Bacillus subtilis (strain 168).